Reading from the N-terminus, the 223-residue chain is MTTNYAHYIDHTLLAMDATEAQIIKLCEEAKQHHFYAVCVNSGYVPVAAQQLAGSSVKVCSVIGFPLGAGLTAAKAFEAQAAINAGAQEIDMVINVGWLKSGKIADVKADIKAVRDNCAATPLKVILETCLLSDEQIVQVCEMCRELDVAFVKTSTGFSTGGAKEEHVKLMRATVGPVMGVKASGAVRDRATAETMIQAGATRIGTSSGVAIVSGQQAAASGY.

Catalysis depends on D91, which acts as the Proton donor/acceptor. The active-site Schiff-base intermediate with acetaldehyde is the K153. K182 functions as the Proton donor/acceptor in the catalytic mechanism.

This sequence belongs to the DeoC/FbaB aldolase family. DeoC type 1 subfamily.

It localises to the cytoplasm. The catalysed reaction is 2-deoxy-D-ribose 5-phosphate = D-glyceraldehyde 3-phosphate + acetaldehyde. Its pathway is carbohydrate degradation; 2-deoxy-D-ribose 1-phosphate degradation; D-glyceraldehyde 3-phosphate and acetaldehyde from 2-deoxy-alpha-D-ribose 1-phosphate: step 2/2. Its function is as follows. Catalyzes a reversible aldol reaction between acetaldehyde and D-glyceraldehyde 3-phosphate to generate 2-deoxy-D-ribose 5-phosphate. The sequence is that of Deoxyribose-phosphate aldolase 1 from Yersinia pestis.